The following is a 438-amino-acid chain: Arginine deiminase-like protein (438 aa).

The protein belongs to the arginine deiminase family.

This chain is Arginine deiminase-like protein, found in Mycoplasma pneumoniae (strain ATCC 29342 / M129 / Subtype 1) (Mycoplasmoides pneumoniae).